The following is a 59-amino-acid chain: Mitochondrial sheath formation-associated protein (59 aa).

The Mitochondrial intermembrane portion of the chain corresponds to M1–W6. The next 2 helical transmembrane spans lie at I2–L22 and M7–M23. The Cytoplasmic portion of the chain corresponds to P24–T40.

As to quaternary structure, interacts with VDAC3.

It localises to the mitochondrion outer membrane. In terms of biological role, regulates sperm development. May be involved in mitochondrial sheath formation. The sequence is that of Mitochondrial sheath formation-associated protein from Homo sapiens (Human).